The sequence spans 189 residues: MKKTLMAVGLAAVISIPFAANAADYVIDTKGAHASINFKVNHLGYSYIKGRFNKFDGEFSYDPANIAASSVVVNVDTRSLDSNHAERDKHIRSADFIDASKYSTATFKSTEVVDKGNGQLEVKGDLTLHGQTKPIVINAEFIGAGQDPWGGQRAGFAGTTRLELKDFGIQVMGASSYVDMELHVEGVQK.

The first 22 residues, 1 to 22, serve as a signal peptide directing secretion; that stretch reads MKKTLMAVGLAAVISIPFAANA.

The protein belongs to the UPF0312 family. Type 1 subfamily.

It is found in the periplasm. This is UPF0312 protein VC0395_0473/VC395_A0785 from Vibrio cholerae serotype O1 (strain ATCC 39541 / Classical Ogawa 395 / O395).